A 427-amino-acid chain; its full sequence is L-rhamnose isomerase (427 aa).

Mn(2+) is bound by residues His-264, Asp-296, and Asp-298.

It belongs to the rhamnose isomerase family. Mn(2+) is required as a cofactor.

The protein resides in the cytoplasm. It catalyses the reaction L-rhamnopyranose = L-rhamnulose. It participates in carbohydrate degradation; L-rhamnose degradation; glycerone phosphate from L-rhamnose: step 1/3. Its function is as follows. Catalyzes the interconversion of L-rhamnose and L-rhamnulose. This chain is L-rhamnose isomerase, found in Lactiplantibacillus plantarum (strain ATCC BAA-793 / NCIMB 8826 / WCFS1) (Lactobacillus plantarum).